The chain runs to 329 residues: Ethylene-responsive transcription factor ERF117 (329 aa).

Disordered regions lie at residues 25–51 and 71–90; these read DATDSSSDDESISGNNPRRQIKPKPPK and NSTGNKAAGNRKTSSGFKGV. Residues 71–86 are compositionally biased toward polar residues; sequence NSTGNKAAGNRKTSSG. Residues 86-143 constitute a DNA-binding region (AP2/ERF); the sequence is GFKGVRRRPWGKFAAEIRNPFEKKRKWLGTFPTEEEAAEAYQKSKREFDERLGLVKQE.

The protein belongs to the AP2/ERF transcription factor family. ERF subfamily.

Its subcellular location is the nucleus. Functionally, probably acts as a transcriptional activator. Binds to the GCC-box pathogenesis-related promoter element. May be involved in the regulation of gene expression by stress factors and by components of stress signal transduction pathways. This is Ethylene-responsive transcription factor ERF117 (ERF117) from Arabidopsis thaliana (Mouse-ear cress).